The sequence spans 558 residues: Dihydroxy-acid dehydratase (558 aa).

Cysteine 50 lines the [2Fe-2S] cluster pocket. Mg(2+) is bound at residue aspartate 82. [2Fe-2S] cluster is bound at residue cysteine 123. Mg(2+) contacts are provided by aspartate 124 and lysine 125. At lysine 125 the chain carries N6-carboxylysine. Residue cysteine 195 coordinates [2Fe-2S] cluster. Glutamate 447 serves as a coordination point for Mg(2+). The active-site Proton acceptor is the serine 472.

This sequence belongs to the IlvD/Edd family. As to quaternary structure, homodimer. Requires [2Fe-2S] cluster as cofactor. Mg(2+) is required as a cofactor.

It carries out the reaction (2R)-2,3-dihydroxy-3-methylbutanoate = 3-methyl-2-oxobutanoate + H2O. It catalyses the reaction (2R,3R)-2,3-dihydroxy-3-methylpentanoate = (S)-3-methyl-2-oxopentanoate + H2O. Its pathway is amino-acid biosynthesis; L-isoleucine biosynthesis; L-isoleucine from 2-oxobutanoate: step 3/4. It functions in the pathway amino-acid biosynthesis; L-valine biosynthesis; L-valine from pyruvate: step 3/4. Functionally, functions in the biosynthesis of branched-chain amino acids. Catalyzes the dehydration of (2R,3R)-2,3-dihydroxy-3-methylpentanoate (2,3-dihydroxy-3-methylvalerate) into 2-oxo-3-methylpentanoate (2-oxo-3-methylvalerate) and of (2R)-2,3-dihydroxy-3-methylbutanoate (2,3-dihydroxyisovalerate) into 2-oxo-3-methylbutanoate (2-oxoisovalerate), the penultimate precursor to L-isoleucine and L-valine, respectively. The protein is Dihydroxy-acid dehydratase of Saccharolobus islandicus (strain L.S.2.15 / Lassen #1) (Sulfolobus islandicus).